Here is a 477-residue protein sequence, read N- to C-terminus: Glycogen synthase (477 aa).

Position 15 (Lys15) interacts with ADP-alpha-D-glucose.

The protein belongs to the glycosyltransferase 1 family. Bacterial/plant glycogen synthase subfamily.

The enzyme catalyses [(1-&gt;4)-alpha-D-glucosyl](n) + ADP-alpha-D-glucose = [(1-&gt;4)-alpha-D-glucosyl](n+1) + ADP + H(+). It functions in the pathway glycan biosynthesis; glycogen biosynthesis. In terms of biological role, synthesizes alpha-1,4-glucan chains using ADP-glucose. The sequence is that of Glycogen synthase from Streptococcus pneumoniae serotype 2 (strain D39 / NCTC 7466).